Reading from the N-terminus, the 432-residue chain is Phosphomethylpyrimidine synthase (432 aa).

Substrate-binding positions include Asn66, Met95, Tyr124, His163, 185–187 (SRG), 226–229 (DGLR), and Glu265. Zn(2+) is bound at residue His269. Tyr292 is a binding site for substrate. His333 contacts Zn(2+). Residues Cys409, Cys412, and Cys416 each contribute to the [4Fe-4S] cluster site.

The protein belongs to the ThiC family. [4Fe-4S] cluster serves as cofactor.

It carries out the reaction 5-amino-1-(5-phospho-beta-D-ribosyl)imidazole + S-adenosyl-L-methionine = 4-amino-2-methyl-5-(phosphooxymethyl)pyrimidine + CO + 5'-deoxyadenosine + formate + L-methionine + 3 H(+). The protein operates within cofactor biosynthesis; thiamine diphosphate biosynthesis. Functionally, catalyzes the synthesis of the hydroxymethylpyrimidine phosphate (HMP-P) moiety of thiamine from aminoimidazole ribotide (AIR) in a radical S-adenosyl-L-methionine (SAM)-dependent reaction. The protein is Phosphomethylpyrimidine synthase of Desulforamulus reducens (strain ATCC BAA-1160 / DSM 100696 / MI-1) (Desulfotomaculum reducens).